The sequence spans 360 residues: Glutamate 5-kinase (360 aa).

Lysine 11 contributes to the ATP binding site. 3 residues coordinate substrate: serine 51, aspartate 138, and asparagine 150. Residues 278–356 (KGEIHINECA…GKKPVVHYDY (79 aa)) form the PUA domain.

The protein belongs to the glutamate 5-kinase family.

The protein resides in the cytoplasm. The catalysed reaction is L-glutamate + ATP = L-glutamyl 5-phosphate + ADP. The protein operates within amino-acid biosynthesis; L-proline biosynthesis; L-glutamate 5-semialdehyde from L-glutamate: step 1/2. In terms of biological role, catalyzes the transfer of a phosphate group to glutamate to form L-glutamate 5-phosphate. The protein is Glutamate 5-kinase of Bacteroides thetaiotaomicron (strain ATCC 29148 / DSM 2079 / JCM 5827 / CCUG 10774 / NCTC 10582 / VPI-5482 / E50).